A 222-amino-acid chain; its full sequence is 6,7-dimethyl-8-ribityllumazine synthase, chloroplastic (222 aa).

The N-terminal 66 residues, 1 to 66 (MASFAASQTC…NRASFVVTNA (66 aa)), are a transit peptide targeting the chloroplast. Residues F89, 122-124 (AYE), and 146-148 (AVV) contribute to the 5-amino-6-(D-ribitylamino)uracil site. 151-152 (DT) serves as a coordination point for (2S)-2-hydroxy-3-oxobutyl phosphate. The active-site Proton donor is the H154. F179 serves as a coordination point for 5-amino-6-(D-ribitylamino)uracil. R193 is a (2S)-2-hydroxy-3-oxobutyl phosphate binding site.

The protein belongs to the DMRL synthase family. As to quaternary structure, oligomer forming an icosahedral capsid.

It localises to the plastid. It is found in the chloroplast. It catalyses the reaction (2S)-2-hydroxy-3-oxobutyl phosphate + 5-amino-6-(D-ribitylamino)uracil = 6,7-dimethyl-8-(1-D-ribityl)lumazine + phosphate + 2 H2O + H(+). It functions in the pathway cofactor biosynthesis; riboflavin biosynthesis; riboflavin from 2-hydroxy-3-oxobutyl phosphate and 5-amino-6-(D-ribitylamino)uracil: step 1/2. Catalyzes the formation of 6,7-dimethyl-8-ribityllumazine by condensation of 5-amino-6-(D-ribitylamino)uracil with 3,4-dihydroxy-2-butanone 4-phosphate. This is the penultimate step in the biosynthesis of riboflavin. The sequence is that of 6,7-dimethyl-8-ribityllumazine synthase, chloroplastic from Spinacia oleracea (Spinach).